We begin with the raw amino-acid sequence, 464 residues long: Methylenetetrahydrofolate--tRNA-(uracil-5-)-methyltransferase TrmFO (464 aa).

13–18 (GGGLAG) provides a ligand contact to FAD.

This sequence belongs to the MnmG family. TrmFO subfamily. The cofactor is FAD.

Its subcellular location is the cytoplasm. The catalysed reaction is uridine(54) in tRNA + (6R)-5,10-methylene-5,6,7,8-tetrahydrofolate + NADH + H(+) = 5-methyluridine(54) in tRNA + (6S)-5,6,7,8-tetrahydrofolate + NAD(+). It catalyses the reaction uridine(54) in tRNA + (6R)-5,10-methylene-5,6,7,8-tetrahydrofolate + NADPH + H(+) = 5-methyluridine(54) in tRNA + (6S)-5,6,7,8-tetrahydrofolate + NADP(+). Its function is as follows. Catalyzes the folate-dependent formation of 5-methyl-uridine at position 54 (M-5-U54) in all tRNAs. In Bartonella bacilliformis (strain ATCC 35685 / KC583 / Herrer 020/F12,63), this protein is Methylenetetrahydrofolate--tRNA-(uracil-5-)-methyltransferase TrmFO.